A 146-amino-acid chain; its full sequence is Prefoldin subunit alpha (146 aa).

The protein belongs to the prefoldin alpha subunit family. Heterohexamer of two alpha and four beta subunits.

It is found in the cytoplasm. Functionally, molecular chaperone capable of stabilizing a range of proteins. Seems to fulfill an ATP-independent, HSP70-like function in archaeal de novo protein folding. This chain is Prefoldin subunit alpha, found in Methanococcus vannielii (strain ATCC 35089 / DSM 1224 / JCM 13029 / OCM 148 / SB).